Reading from the N-terminus, the 456-residue chain is Acetylcholine receptor subunit alpha (456 aa).

Residues 1–20 form the signal peptide; the sequence is MNYFILILPILPYLYGPAVC. Over 21–230 the chain is Extracellular; it reads SEDETRLVKT…ITYHFLLLRL (210 aa). 2 disulfides stabilise this stretch: C148/C162 and C212/C213. N-linked (GlcNAc...) asparagine glycosylation occurs at N161. A run of 3 helical transmembrane segments spans residues 231–255, 263–281, and 297–316; these read PLYF…VFYL, MTLS…LVIV, and YMLF…VIVI. Topologically, residues 317-428 are cytoplasmic; that stretch reads NTHHRSPSTH…WKFVAMVLDH (112 aa). The helical transmembrane segment at 429–447 threads the bilayer; it reads ILLCVFMAVCIIGTLGVFA.

The protein belongs to the ligand-gated ion channel (TC 1.A.9) family. Acetylcholine receptor (TC 1.A.9.1) subfamily. Alpha-1/CHRNA1 sub-subfamily. One of the alpha chains that assemble within the acetylcholine receptor, a pentamer of two alpha chains, a beta, a delta, and a gamma or epsilon chains.

It localises to the postsynaptic cell membrane. Its subcellular location is the cell membrane. The enzyme catalyses K(+)(in) = K(+)(out). It catalyses the reaction Na(+)(in) = Na(+)(out). Functionally, upon acetylcholine binding, the AChR responds by an extensive change in conformation that affects all subunits and leads to opening of an ion-conducting channel across the plasma membrane. This chain is Acetylcholine receptor subunit alpha (chrna1), found in Danio rerio (Zebrafish).